Consider the following 339-residue polypeptide: GTPase Obg (339 aa).

The Obg domain occupies 1-159 (MKFVDEAFVR…RELKLELKLL (159 aa)). Residues 127 to 147 (NTHFKSSTNRAPRRTTSGEEG) form a disordered region. The 174-residue stretch at 160–333 (ADVGLLGLPN…LCYDLMSFLE (174 aa)) folds into the OBG-type G domain. Residues 166–173 (GLPNAGKS), 191–195 (FTTLY), 213–216 (DIPG), 283–286 (NKID), and 314–316 (SAI) contribute to the GTP site. Mg(2+) contacts are provided by Ser-173 and Thr-193.

This sequence belongs to the TRAFAC class OBG-HflX-like GTPase superfamily. OBG GTPase family. In terms of assembly, monomer. Mg(2+) serves as cofactor.

Its subcellular location is the cytoplasm. In terms of biological role, an essential GTPase which binds GTP, GDP and possibly (p)ppGpp with moderate affinity, with high nucleotide exchange rates and a fairly low GTP hydrolysis rate. Plays a role in control of the cell cycle, stress response, ribosome biogenesis and in those bacteria that undergo differentiation, in morphogenesis control. The chain is GTPase Obg from Coxiella burnetii (strain CbuG_Q212) (Coxiella burnetii (strain Q212)).